The sequence spans 557 residues: NADP-dependent malic enzyme (557 aa).

The active-site Proton donor is Tyr-88. Arg-141 contributes to the NADP(+) binding site. Lys-159 functions as the Proton acceptor in the catalytic mechanism. Residues Glu-231, Asp-232, and Asp-255 each contribute to the a divalent metal cation site. Asp-255 contacts NADP(+). Ser-322 is subject to Phosphoserine. An NADP(+)-binding site is contributed by Asn-394.

The protein belongs to the malic enzymes family. Homotetramer. Requires Mg(2+) as cofactor. Mn(2+) serves as cofactor.

The protein localises to the cytoplasm. It carries out the reaction (S)-malate + NADP(+) = pyruvate + CO2 + NADPH. It catalyses the reaction oxaloacetate + H(+) = pyruvate + CO2. Catalyzes the oxidative decarboxylation of (S)-malate in the presence of NADP(+) and divalent metal ions, and decarboxylation of oxaloacetate. This Sus scrofa (Pig) protein is NADP-dependent malic enzyme (ME1).